The following is a 116-amino-acid chain: uncharacterized protein (116 aa).

This is an uncharacterized protein from Saccharomyces cerevisiae (strain ATCC 204508 / S288c) (Baker's yeast).